We begin with the raw amino-acid sequence, 812 residues long: MRHPLISLLLLIAFYSTSSEAFVPKCNSFYVRWPRVRLNFKAVAEARLSLKGCQSACSLGEDPVSPGKQLECAAVNHQASPDGFSHLCAVFQPHQLQNVDGYVEADDRFTFYWKYCLPSTRKCSGEYAFTYLSDRYMDQKSVIKWTTKANLEECLSDCLDEKSFECRSISFNRTDGGCHMSKDSQISRPEAIRLNNNPNYRIDYYENNCYNLSESFTFKHECRDNGISVSVKSRLPYTGAIYGLYDFFTCRTEPKEATEFDHFFPYQTVSKNCSDSIKYKGNEMVLEVVLSTDGIEPLYFITPEDLTYQAKCPISGVKAKDPANTKSSAHLDNRNKAMEASAHALFELLSKTGDDEALQNTFPLPLTTTTEVIRQVTTTTKKPSTTTSTKKLTTTTTTTPKPSQKPTTTTTKSPVVITTTTKTSPKPTTSPSTTTSTTTSTTIPPSTTTRKPANPRRSTIMSATSKVAIIVGKDSSFARARLFTTKHPSTQKIDVPTTTVQTSTTVPTTPSKTTATTTTTPKPTTTETATTSSSTTTVTTQKPTTVTSTTTLPSTTASTTTKTTTSTPTSPQTTTTHVGAPASSVASVAHDGSTLAGKPKVPVIFDIFHNGQPVEAVVVGTKISLSFRPHYPIPPEYVDVRGCQVEPIDPKYEWEHEPLFIIRDGCPADGVGLVCPPTHSEFGAKVSVEAFRYQTTGQVQYSCLVRICPFAPCPKNTCDDVEGCDSSYMHRYRRELSLEDIKKALEANPELASQFGISPSAFARNPSKSKNFTSVVEEQQRIALGGDYLVRRRLIVVNSEDQLRYYVRTGNI.

Residues 1–21 (MRHPLISLLLLIAFYSTSSEA) form the signal peptide. 2 consecutive Apple domains span residues 26–116 (CNSF…WKYC) and 123–209 (CSGE…ENNC). 6 disulfide bridges follow: Cys26/Cys116, Cys53/Cys88, Cys57/Cys72, Cys123/Cys209, Cys154/Cys178, and Cys158/Cys166. N-linked (GlcNAc...) asparagine glycosylation is found at Asn172, Asn211, and Asn272. Residues 221–725 (ECRDNGISVS…NTCDDVEGCD (505 aa)) form the ZP domain. Composition is skewed to low complexity over residues 375–449 (QVTT…STTT) and 496–584 (PTTT…PASS). Disordered regions lie at residues 375 to 461 (QVTT…STIM) and 494 to 584 (DVPT…PASS). N-linked (GlcNAc...) asparagine glycosylation occurs at Asn771.

In terms of processing, cleaved at the C-terminal domain. As to expression, expressed in external cuticle-producing epithelial cells including the epidermis, vulva, rectum, excretory duct and excretory pore.

The protein resides in the apical cell membrane. It is found in the secreted. The protein localises to the extracellular space. Its function is as follows. Required for epithelial tube development and shaping. Involved in the morphogenesis and function of the three unicellular tubes of the excretory system, the canal cell, the duct cell and the pore cell. Also plays a role in cuticle development, alae formation and shaping of the vulval lumen. Required for larval development. This is Protein let-653 from Caenorhabditis elegans.